A 508-amino-acid polypeptide reads, in one-letter code: Acetyl-coenzyme A carboxylase carboxyl transferase subunit beta, chloroplastic (508 aa).

Disordered stretches follow at residues proline 30 to glycine 51 and asparagine 173 to histidine 234. Residues serine 35–lysine 47 are compositionally biased toward basic and acidic residues. Residues asparagine 173–glutamate 219 show a composition bias toward low complexity. The span at aspartate 220 to histidine 234 shows a compositional bias: polar residues. One can recognise a CoA carboxyltransferase N-terminal domain in the interval leucine 244–asparagine 508. 4 residues coordinate Zn(2+): cysteine 248, cysteine 251, cysteine 267, and cysteine 270. The C4-type zinc-finger motif lies at cysteine 248–cysteine 270.

The protein belongs to the AccD/PCCB family. Acetyl-CoA carboxylase is a heterohexamer composed of biotin carboxyl carrier protein, biotin carboxylase and 2 subunits each of ACCase subunit alpha and ACCase plastid-coded subunit beta (accD). The cofactor is Zn(2+).

The protein localises to the plastid. It localises to the chloroplast stroma. It carries out the reaction N(6)-carboxybiotinyl-L-lysyl-[protein] + acetyl-CoA = N(6)-biotinyl-L-lysyl-[protein] + malonyl-CoA. It participates in lipid metabolism; malonyl-CoA biosynthesis; malonyl-CoA from acetyl-CoA: step 1/1. Component of the acetyl coenzyme A carboxylase (ACC) complex. Biotin carboxylase (BC) catalyzes the carboxylation of biotin on its carrier protein (BCCP) and then the CO(2) group is transferred by the transcarboxylase to acetyl-CoA to form malonyl-CoA. The protein is Acetyl-coenzyme A carboxylase carboxyl transferase subunit beta, chloroplastic of Lactuca sativa (Garden lettuce).